The chain runs to 376 residues: DNA-directed RNA polymerase subunit alpha (376 aa).

The tract at residues 1–259 (MSDCSQNLLY…KHFSIFEKMD (259 aa)) is alpha N-terminal domain (alpha-NTD). Residues 276–376 (KDDILHKLVL…DKIRSKNGKG (101 aa)) form an alpha C-terminal domain (alpha-CTD) region.

Belongs to the RNA polymerase alpha chain family. Homodimer. The RNAP catalytic core consists of 2 alpha, 1 beta, 1 beta' and 1 omega subunit. When a sigma factor is associated with the core the holoenzyme is formed, which can initiate transcription.

The catalysed reaction is RNA(n) + a ribonucleoside 5'-triphosphate = RNA(n+1) + diphosphate. Functionally, DNA-dependent RNA polymerase catalyzes the transcription of DNA into RNA using the four ribonucleoside triphosphates as substrates. The chain is DNA-directed RNA polymerase subunit alpha from Chlamydia abortus (strain DSM 27085 / S26/3) (Chlamydophila abortus).